The chain runs to 735 residues: Transcription factor RFX4 (735 aa).

The segment at 27 to 59 (NKRYSSHTSLGNVSNDENEEKENNRASKPHSTP) is disordered. Polar residues predominate over residues 32–41 (SHTSLGNVSN). A DNA-binding region spans residues 44 to 126 (NEEKENNRAS…RRLGTRGQSK (83 aa)). The segment at residues 61 to 136 (TLQWLEENYE…YHYYGIAVKE (76 aa)) is a DNA-binding region (RFX-type winged-helix). Positions 315-487 (RFSQILRRQT…NELMRAMKGE (173 aa)) are necessary for dimerization. The interval 501 to 538 (EATPPTPSPGPSFSPAKSATSVEVPPPSSPVSNPSPEY) is disordered.

Belongs to the RFX family. As to quaternary structure, homodimer. Heterodimer with RFX2 and RFX3. Binds DNA. Interacts with GPS2. Isoform 1: Brain-specific. Isoform 2: Testis-specific. Isoform 1: Highly expressed in the suprachiasmatic nucleus, the central pacemaker site of the circadian clock (at protein level).

Its subcellular location is the nucleus. Its function is as follows. Transcription factor that plays a role in early brain development. May activate transcription by interacting directly with the X-box. May activate transcription from CX3CL1 promoter through the X-box during brain development. May be required for neural tube ciliogenesis during embryogenesis. This Mus musculus (Mouse) protein is Transcription factor RFX4 (Rfx4).